Here is an 88-residue protein sequence, read N- to C-terminus: Putative transmembrane protein ORF24 (88 aa).

3 helical membrane-spanning segments follow: residues 16-36, 42-62, and 64-84; these read LNMG…WAGM, AVFV…VTQF, and FIWF…VASI.

It localises to the host membrane. This Haloarcula hispanica (His1V) protein is Putative transmembrane protein ORF24.